The chain runs to 1614 residues: Adenylate cyclase type 10 (1614 aa).

2 Guanylate cyclase domains span residues 42–179 (VLMF…RLAQ) and 293–418 (TIVF…ARMM). 2 residues coordinate Mg(2+): D47 and I48. 47–52 (DISGFT) serves as a coordination point for ATP. K95 contacts hydrogencarbonate. D99 lines the Mg(2+) pocket. D99 and K144 together coordinate ATP. Positions 167, 176, and 337 each coordinate hydrogencarbonate. Residues V406 and 412 to 416 (NIAAR) each bind ATP.

This sequence belongs to the adenylyl cyclase class-4/guanylyl cyclase family. Mg(2+) is required as a cofactor. The cofactor is Mn(2+). Expressed in testis.

The protein localises to the cell membrane. It is found in the cytoplasm. Its subcellular location is the cytoskeleton. It localises to the perinuclear region. The protein resides in the nucleus. The protein localises to the cell projection. It is found in the cilium. Its subcellular location is the mitochondrion. The enzyme catalyses ATP = 3',5'-cyclic AMP + diphosphate. With respect to regulation, activated by manganese or magnesium ions. In the presence of magnesium ions, the enzyme is activated by bicarbonate. Calcium mildly increases the enzyme activity, also in the presence of magnesium ions. Its function is as follows. Catalyzes the formation of the signaling molecule cAMP. May function as sensor that mediates responses to changes in cellular bicarbonate and CO(2) levels. Has a critical role in mammalian spermatogenesis by producing the cAMP which regulates cAMP-responsive nuclear factors indispensable for sperm maturation in the epididymis. Induces capacitation, the maturational process that sperm undergo prior to fertilization. Involved in ciliary beat regulation. In Mus musculus (Mouse), this protein is Adenylate cyclase type 10 (Adcy10).